We begin with the raw amino-acid sequence, 410 residues long: Neuroserpin (410 aa).

The N-terminal stretch at 1-16 is a signal peptide; the sequence is MYFLGLLSLLVLPSKA. Asparagine 157 and asparagine 401 each carry an N-linked (GlcNAc...) asparagine glycan.

It belongs to the serpin family. In terms of tissue distribution, detected in embryonic ocular vitreous fluid (at protein level). In the embryo present in retina, brain, cerebellum and spinal cord. In adult, predominantly expressed in the brain.

The protein localises to the secreted. The protein resides in the cytoplasmic vesicle. It is found in the secretory vesicle lumen. It localises to the perikaryon. Functionally, serine protease inhibitor that inhibits plasminogen activators and plasmin but not thrombin. May be involved in the formation or reorganization of synaptic connections as well as for synaptic plasticity in the adult nervous system. May protect neurons from cell damage by tissue-type plasminogen activator. The chain is Neuroserpin (SERPINI1) from Gallus gallus (Chicken).